Here is a 120-residue protein sequence, read N- to C-terminus: Ribosome-binding factor A (120 aa).

The protein belongs to the RbfA family. Monomer. Binds 30S ribosomal subunits, but not 50S ribosomal subunits or 70S ribosomes.

The protein localises to the cytoplasm. Functionally, one of several proteins that assist in the late maturation steps of the functional core of the 30S ribosomal subunit. Associates with free 30S ribosomal subunits (but not with 30S subunits that are part of 70S ribosomes or polysomes). Required for efficient processing of 16S rRNA. May interact with the 5'-terminal helix region of 16S rRNA. This chain is Ribosome-binding factor A, found in Desulforamulus reducens (strain ATCC BAA-1160 / DSM 100696 / MI-1) (Desulfotomaculum reducens).